Reading from the N-terminus, the 289-residue chain is RNA-binding protein CP31B, chloroplastic (289 aa).

The N-terminal 71 residues, 1 to 71 (MTSSVLTPSL…NSSPVVTFVS (71 aa)), are a transit peptide targeting the chloroplast. RRM domains are found at residues 113–191 (AKLF…RAAP) and 207–285 (FRIY…VAEE).

In terms of processing, ADP-ribosylated by the Pseudomonas syringae type III effector HopU1. ADP-ribosylation reduces the ability of the protein to bind RNA.

Its subcellular location is the plastid. The protein resides in the chloroplast. Its function is as follows. Required for specific RNA editing events in chloroplasts and stabilizes specific chloroplast mRNAs. The chain is RNA-binding protein CP31B, chloroplastic from Arabidopsis thaliana (Mouse-ear cress).